We begin with the raw amino-acid sequence, 132 residues long: Small ribosomal subunit protein uS17c (132 aa).

Residues 1 to 11 are compositionally biased toward low complexity; sequence MLLLSSPFVSV. Disordered regions lie at residues 1-23 and 104-132; these read MLLL…SHGA and PLPP…SSRE. A chloroplast-targeting transit peptide spans 1–31; sequence MLLLSSPFVSVSPPPPPLSSHGARPALRIEA. The segment covering 122–132 has biased composition (acidic residues); sequence SDDDQEPSSRE.

Belongs to the universal ribosomal protein uS17 family. In terms of assembly, part of the 30S ribosomal subunit.

It localises to the plastid. Its subcellular location is the chloroplast. Its function is as follows. One of the primary rRNA binding proteins, it binds specifically to the 5'-end of 16S ribosomal RNA. In the hcf60 mutation the Activator tag is inserted 17 base pars upstream of the initiation codon. This mutation is seedling lethal, due to plastid ribosome insufficiency. However under non-light stressed conditions photosynthesis and oxygen evolution can occur. This Zea mays (Maize) protein is Small ribosomal subunit protein uS17c (RPS17).